Consider the following 317-residue polypeptide: Tyrosine--tRNA ligase (317 aa).

Y33 provides a ligand contact to L-tyrosine. Residues 38 to 46 carry the 'HIGH' region motif; it reads PSGKIHMGH. Positions 155, 159, 162, and 177 each coordinate L-tyrosine. The short motif at 211–215 is the 'KMSKS' region element; the sequence is KMASS. An ATP-binding site is contributed by S214.

Belongs to the class-I aminoacyl-tRNA synthetase family. TyrS type 3 subfamily. As to quaternary structure, homodimer.

It localises to the cytoplasm. It catalyses the reaction tRNA(Tyr) + L-tyrosine + ATP = L-tyrosyl-tRNA(Tyr) + AMP + diphosphate + H(+). In terms of biological role, catalyzes the attachment of tyrosine to tRNA(Tyr) in a two-step reaction: tyrosine is first activated by ATP to form Tyr-AMP and then transferred to the acceptor end of tRNA(Tyr). This chain is Tyrosine--tRNA ligase, found in Methanosarcina mazei (strain ATCC BAA-159 / DSM 3647 / Goe1 / Go1 / JCM 11833 / OCM 88) (Methanosarcina frisia).